A 446-amino-acid polypeptide reads, in one-letter code: Endoplasmic reticulum membrane adapter protein XK (446 aa).

The Cytoplasmic segment spans residues 1–2 (MK). A helical membrane pass occupies residues 3–23 (FPASVIASVFLFVAETAAALY). Residues 24-37 (LSSTYRSAGDRMWQ) are Extracellular-facing. A helical transmembrane segment spans residues 38–58 (VLTLLFSLMPCALVQFTLLFV). Topologically, residues 59 to 68 (HRDLSRDRPL) are cytoplasmic. The helical transmembrane segment at 69–89 (ALLMHLLQLGPLYRCCEVFCI) threads the bilayer. The Extracellular segment spans residues 90 to 140 (YCQSDQNEEPYVSITKKRQMPKDGLSEEVEKEVGQAEGKLITHRSAFSRAS). At Ser-115 the chain carries Phosphoserine. A helical membrane pass occupies residues 141–161 (VIQAFLGSAPQLTLQLYITVL). The Cytoplasmic segment spans residues 162–171 (EQNITTGRCF). Residues 172-192 (IMTLSLLSIVYGALRCNILAI) form a helical membrane-spanning segment. Residues 193–208 (KIKYDEYEVKVKPLAY) lie on the Extracellular side of the membrane. Residues 209–229 (VCIFLWRSFEIATRVIVLVLF) form a helical membrane-spanning segment. At 230–235 (TSVLKI) the chain is on the cytoplasmic side. Residues 236 to 256 (WVVAVILVNFFSFFLYPWIVF) traverse the membrane as a helical segment. The Extracellular portion of the chain corresponds to 257–277 (WCSGSPFPENIEKALSRVGTT). The helical transmembrane segment at 278–298 (IVLCFLTLLYAGINMFCWSAV) threads the bilayer. The Cytoplasmic portion of the chain corresponds to 299 to 317 (QLKIDNPELISKSQNWYRL). Residues 318–338 (LIYYMTRFIENSVLLLLWYFF) traverse the membrane as a helical segment. Topologically, residues 339–349 (KTDIYMYVCAP) are extracellular. The chain crosses the membrane as a helical span at residues 350–370 (LLILQLLIGYCTGILFMLVFY). Topologically, residues 371-446 (QFFHPCKKLF…IWTAVDLCSA (76 aa)) are cytoplasmic.

This sequence belongs to the XK family. Heterodimer with Kell; disulfide-linked. Interacts with VPS13A.

It localises to the endoplasmic reticulum membrane. Its function is as follows. Recruits the lipid transfer protein VPS13A from lipid droplets to the endoplasmic reticulum (ER) membrane. This chain is Endoplasmic reticulum membrane adapter protein XK, found in Mus musculus (Mouse).